The following is a 230-amino-acid chain: 5'-methylthioadenosine/S-adenosylhomocysteine nucleosidase (230 aa).

Glu-12 functions as the Proton acceptor in the catalytic mechanism. Residues Gly-78, Met-153, and 174–175 (ME) contribute to the substrate site. Asp-198 (proton donor) is an active-site residue.

Belongs to the PNP/UDP phosphorylase family. MtnN subfamily.

It carries out the reaction S-adenosyl-L-homocysteine + H2O = S-(5-deoxy-D-ribos-5-yl)-L-homocysteine + adenine. It catalyses the reaction S-methyl-5'-thioadenosine + H2O = 5-(methylsulfanyl)-D-ribose + adenine. The enzyme catalyses 5'-deoxyadenosine + H2O = 5-deoxy-D-ribose + adenine. Its pathway is amino-acid biosynthesis; L-methionine biosynthesis via salvage pathway; S-methyl-5-thio-alpha-D-ribose 1-phosphate from S-methyl-5'-thioadenosine (hydrolase route): step 1/2. Catalyzes the irreversible cleavage of the glycosidic bond in both 5'-methylthioadenosine (MTA) and S-adenosylhomocysteine (SAH/AdoHcy) to adenine and the corresponding thioribose, 5'-methylthioribose and S-ribosylhomocysteine, respectively. Also cleaves 5'-deoxyadenosine, a toxic by-product of radical S-adenosylmethionine (SAM) enzymes, into 5-deoxyribose and adenine. This chain is 5'-methylthioadenosine/S-adenosylhomocysteine nucleosidase, found in Tolumonas auensis (strain DSM 9187 / NBRC 110442 / TA 4).